Consider the following 217-residue polypeptide: Cysteine-rich protein 3 (217 aa).

The LIM zinc-binding 1 domain maps to 3–64 (WTCPRCQQPV…KPCYGALFGP (62 aa)). Positions 84–112 (PGCTTPLSPSSFSPPRPRTGLPQGKKSPP) are disordered. Residues 122-183 (SLCPGCGEPV…VPCYGYLFGP (62 aa)) form the LIM zinc-binding 2 domain.

In terms of tissue distribution, expressed in most tissues, but not in skeletal muscle.

It is found in the cytoplasm. This Homo sapiens (Human) protein is Cysteine-rich protein 3 (CRIP3).